The sequence spans 289 residues: Rhodopsin (289 aa).

Residues 1–7 (YLVSPAA) lie on the Extracellular side of the membrane. A helical transmembrane segment spans residues 8-32 (YAALGAYMFLLILIGFPVNFLTLYV). Residues 33 to 44 (TLEHKKLRTPLN) are Cytoplasmic-facing. The chain crosses the membrane as a helical span at residues 45–67 (YILLNLAVADLFMVLGGFTTTMY). Residues 68-81 (TSMHGYFVLGRLGC) are Extracellular-facing. A disulfide bridge connects residues cysteine 81 and cysteine 158. The helical transmembrane segment at 82-104 (NLEGFFATLGGEIALWSLVVLAI) threads the bilayer. The 'Ionic lock' involved in activated form stabilization motif lies at 105 to 107 (ERW). Residues 105-123 (ERWIVVCKPISNFRFTEDN) are Cytoplasmic-facing. Residues 124 to 144 (AIMGLAFSWVMALTCAVPPLV) traverse the membrane as a helical segment. Over 145–173 (GWSRYIPEGMQCSCGVDYYTRAEGFNNES) the chain is Extracellular. A glycan (N-linked (GlcNAc...) asparagine) is linked at asparagine 171. The chain crosses the membrane as a helical span at residues 174–195 (FVIYMFIVHFPIPLSVIFFCYG). Over 196-223 (RLLCAVKEAAAAQQESETTQRAEKEVSR) the chain is Cytoplasmic. A helical transmembrane segment spans residues 224 to 245 (MVVILVIGFLVCWLPYASVAWW). Over 246-257 (IFCNQGSDFGPI) the chain is Extracellular. A helical membrane pass occupies residues 258–279 (FMTLPSFFAKRPAIYNPMIYIC). The residue at position 267 (lysine 267) is an N6-(retinylidene)lysine. Residues 280–289 (MNKQFRHCMI) are Cytoplasmic-facing.

It belongs to the G-protein coupled receptor 1 family. Opsin subfamily. Phosphorylated on some or all of the serine and threonine residues present in the C-terminal region. In terms of processing, contains one covalently linked retinal chromophore.

It is found in the membrane. It localises to the cell projection. The protein localises to the cilium. Its subcellular location is the photoreceptor outer segment. Photoreceptor required for image-forming vision at low light intensity. While most salt water fish species use retinal as chromophore, most freshwater fish use 3-dehydroretinal, or a mixture of retinal and 3-dehydroretinal. Light-induced isomerization of 11-cis to all-trans retinal triggers a conformational change that activates signaling via G-proteins. Subsequent receptor phosphorylation mediates displacement of the bound G-protein alpha subunit by arrestin and terminates signaling. The sequence is that of Rhodopsin (rho) from Batrachocottus multiradiatus (Baikal sculpin).